The primary structure comprises 173 residues: MSIILGIDPGSRITGYGVIRQVGRQLTYLGSGCIRTKVDDLPSRLKLIYAGVTEIITQFQPDYFAIEQVFMAKNADSALKLGQARGVAIVAAVNQELPVFEYAARQVKQTVVGIGSAEKSQVQHMVRTLLKLPANPQADAADALAIAITHCHVSQNVMQMSESRLNLARGRLR.

Catalysis depends on residues Asp8, Glu67, and Asp139. Mg(2+)-binding residues include Asp8, Glu67, and Asp139.

It belongs to the RuvC family. As to quaternary structure, homodimer which binds Holliday junction (HJ) DNA. The HJ becomes 2-fold symmetrical on binding to RuvC with unstacked arms; it has a different conformation from HJ DNA in complex with RuvA. In the full resolvosome a probable DNA-RuvA(4)-RuvB(12)-RuvC(2) complex forms which resolves the HJ. Mg(2+) is required as a cofactor.

Its subcellular location is the cytoplasm. It carries out the reaction Endonucleolytic cleavage at a junction such as a reciprocal single-stranded crossover between two homologous DNA duplexes (Holliday junction).. Its function is as follows. The RuvA-RuvB-RuvC complex processes Holliday junction (HJ) DNA during genetic recombination and DNA repair. Endonuclease that resolves HJ intermediates. Cleaves cruciform DNA by making single-stranded nicks across the HJ at symmetrical positions within the homologous arms, yielding a 5'-phosphate and a 3'-hydroxyl group; requires a central core of homology in the junction. The consensus cleavage sequence is 5'-(A/T)TT(C/G)-3'. Cleavage occurs on the 3'-side of the TT dinucleotide at the point of strand exchange. HJ branch migration catalyzed by RuvA-RuvB allows RuvC to scan DNA until it finds its consensus sequence, where it cleaves and resolves the cruciform DNA. This chain is Crossover junction endodeoxyribonuclease RuvC, found in Salmonella paratyphi C (strain RKS4594).